Reading from the N-terminus, the 153-residue chain is D-aminoacyl-tRNA deacylase (153 aa).

A Gly-cisPro motif, important for rejection of L-amino acids motif is present at residues 142–143; the sequence is GP.

Belongs to the DTD family. Homodimer.

The protein localises to the cytoplasm. The enzyme catalyses glycyl-tRNA(Ala) + H2O = tRNA(Ala) + glycine + H(+). The catalysed reaction is a D-aminoacyl-tRNA + H2O = a tRNA + a D-alpha-amino acid + H(+). In terms of biological role, an aminoacyl-tRNA editing enzyme that deacylates mischarged D-aminoacyl-tRNAs. Also deacylates mischarged glycyl-tRNA(Ala), protecting cells against glycine mischarging by AlaRS. Acts via tRNA-based rather than protein-based catalysis; rejects L-amino acids rather than detecting D-amino acids in the active site. By recycling D-aminoacyl-tRNA to D-amino acids and free tRNA molecules, this enzyme counteracts the toxicity associated with the formation of D-aminoacyl-tRNA entities in vivo and helps enforce protein L-homochirality. This Cupriavidus taiwanensis (strain DSM 17343 / BCRC 17206 / CCUG 44338 / CIP 107171 / LMG 19424 / R1) (Ralstonia taiwanensis (strain LMG 19424)) protein is D-aminoacyl-tRNA deacylase.